The sequence spans 503 residues: Arabinose import ATP-binding protein AraG (503 aa).

2 ABC transporter domains span residues 5–240 and 253–497; these read LRFD…MVGR and LGDV…LPQG. 37–44 is an ATP binding site; it reads GENGAGKS.

This sequence belongs to the ABC transporter superfamily. Arabinose importer (TC 3.A.1.2.2) family. In terms of assembly, the complex is composed of two ATP-binding proteins (AraG), two transmembrane proteins (AraH) and a solute-binding protein (AraF).

It localises to the cell inner membrane. The enzyme catalyses L-arabinose(out) + ATP + H2O = L-arabinose(in) + ADP + phosphate + H(+). Its function is as follows. Part of the ABC transporter complex AraFGH involved in arabinose import. Responsible for energy coupling to the transport system. This Burkholderia pseudomallei (strain 1710b) protein is Arabinose import ATP-binding protein AraG.